The chain runs to 533 residues: MDLKEACGSEASRETESGGMGSLGGHSSWQSFAHRSTLHGLRFIFPYSSSSSSSSSYRSTSRRLLWSAALLASLVLLVLESTERLAYFLSYPHVTSVDAVVSGSLVFPAVTVCNLNAYRFTRLTQNDLYHAGELLALLDVHLQIPEPHLAEPHVLAFLTEKSNFTNYRPKPFSMREFTERVGHDLKEMMLYCRFQGQECSHQDFKTVFTRYGKCYMFNAAEEGKTLRTTMKGGTGNGLEIMLDIQQDEYLPVWGETEETAFEAGVRVQIHSQAEPPFVHELGFGVAPGFQTFVATQEQRLTYLPPPWGECVSRALDSGLFQVYSVSACRIECETRYIVENCNCRMVYMPGDSPYCTPEQYKDCAEPALAALSAVEGTNCICRSPCNMTRYNKELSMVKIPSKTSARYLEKKFNRSEKYITDNILVLDVFFEALNYETIEQKKAYEVAGLLGDIGGQMGLFIGASILTLLELFDYAYEVVKERLLDLLNREEEEESHGEDVSTCDPVVNHSESISHTVSVPLQTTLGTLEEIAC.

Positions 1–16 (MDLKEACGSEASRETE) are enriched in basic and acidic residues. The disordered stretch occupies residues 1–23 (MDLKEACGSEASRETESGGMGSL). Residues 1 to 68 (MDLKEACGSE…STSRRLLWSA (68 aa)) are Cytoplasmic-facing. The chain crosses the membrane as a helical span at residues 69-89 (ALLASLVLLVLESTERLAYFL). At 90–445 (SYPHVTSVDA…ETIEQKKAYE (356 aa)) the chain is on the extracellular side. 6 disulfide bridges follow: C113–C214, C310–C385, C328–C381, C332–C379, C341–C363, and C343–C355. N163 is a glycosylation site (N-linked (GlcNAc...) asparagine). Residues N386 and N413 are each glycosylated (N-linked (GlcNAc...) asparagine). A helical membrane pass occupies residues 446–466 (VAGLLGDIGGQMGLFIGASIL). The GAS motif; ion selectivity filter motif lies at 462-464 (GAS). Over 467–533 (TLLELFDYAY…TLGTLEEIAC (67 aa)) the chain is Cytoplasmic.

Belongs to the amiloride-sensitive sodium channel (TC 1.A.6) family. ASIC2 subfamily. As to quaternary structure, can form homotrimers; probably non-functional. Heterotrimer; could form functional heterotrimers producing channel with specific properties depending on their composition. In terms of tissue distribution, expressed in central nervous system.

The protein resides in the cell membrane. The enzyme catalyses Na(+)(in) = Na(+)(out). Its activity is regulated as follows. Inhibited by the diuretic drug amiloride. In terms of biological role, could form pH-gated heterotrimeric sodium channels that act as postsynaptic excitatory sensors in the nervous system, generating rapid, transient inward currents that fully desensitize upon extracellular acidification. This chain is Acid-sensing ion channel 2 (asic2), found in Danio rerio (Zebrafish).